Consider the following 134-residue polypeptide: Large ribosomal subunit protein uL16c (134 aa).

This sequence belongs to the universal ribosomal protein uL16 family. Part of the 50S ribosomal subunit.

Its subcellular location is the plastid. The protein localises to the chloroplast. In Pinus koraiensis (Korean pine), this protein is Large ribosomal subunit protein uL16c.